Consider the following 475-residue polypeptide: Membrane-bound lytic murein transglycosylase F (475 aa).

An N-terminal signal peptide occupies residues 1–30 (MKKLKINYLFIGILTLLLAAALWPSIPWFG). Residues 31–269 (KTENHIAAIQ…RIEEKYLGHG (239 aa)) form a non-LT domain region. The interval 270-475 (DDFDYVDTRS…MKLAQDYPAV (206 aa)) is LT domain. The active site involves Glu314.

This sequence in the N-terminal section; belongs to the bacterial solute-binding protein 3 family. It in the C-terminal section; belongs to the transglycosylase Slt family.

It is found in the cell outer membrane. It carries out the reaction Exolytic cleavage of the (1-&gt;4)-beta-glycosidic linkage between N-acetylmuramic acid (MurNAc) and N-acetylglucosamine (GlcNAc) residues in peptidoglycan, from either the reducing or the non-reducing ends of the peptidoglycan chains, with concomitant formation of a 1,6-anhydrobond in the MurNAc residue.. Its function is as follows. Murein-degrading enzyme that degrades murein glycan strands and insoluble, high-molecular weight murein sacculi, with the concomitant formation of a 1,6-anhydromuramoyl product. Lytic transglycosylases (LTs) play an integral role in the metabolism of the peptidoglycan (PG) sacculus. Their lytic action creates space within the PG sacculus to allow for its expansion as well as for the insertion of various structures such as secretion systems and flagella. In Salmonella typhi, this protein is Membrane-bound lytic murein transglycosylase F.